Reading from the N-terminus, the 460-residue chain is Serine--tRNA ligase (460 aa).

242-244 (TAE) contributes to the L-serine binding site. ATP contacts are provided by residues 273–275 (RRE) and Val-289. Glu-296 provides a ligand contact to L-serine. ATP is bound at residue 369–372 (EVSS). Ser-405 serves as a coordination point for L-serine.

This sequence belongs to the class-II aminoacyl-tRNA synthetase family. Type-1 seryl-tRNA synthetase subfamily. Homodimer. The tRNA molecule binds across the dimer.

The protein localises to the cytoplasm. It carries out the reaction tRNA(Ser) + L-serine + ATP = L-seryl-tRNA(Ser) + AMP + diphosphate + H(+). The catalysed reaction is tRNA(Sec) + L-serine + ATP = L-seryl-tRNA(Sec) + AMP + diphosphate + H(+). Its pathway is aminoacyl-tRNA biosynthesis; selenocysteinyl-tRNA(Sec) biosynthesis; L-seryl-tRNA(Sec) from L-serine and tRNA(Sec): step 1/1. Functionally, catalyzes the attachment of serine to tRNA(Ser). Is also able to aminoacylate tRNA(Sec) with serine, to form the misacylated tRNA L-seryl-tRNA(Sec), which will be further converted into selenocysteinyl-tRNA(Sec). In Haloquadratum walsbyi (strain DSM 16790 / HBSQ001), this protein is Serine--tRNA ligase.